The chain runs to 58 residues: Large ribosomal subunit protein uL30 (58 aa).

It belongs to the universal ribosomal protein uL30 family. In terms of assembly, part of the 50S ribosomal subunit.

The protein is Large ribosomal subunit protein uL30 of Pseudomonas putida (strain W619).